A 278-amino-acid polypeptide reads, in one-letter code: Elongation factor Ts (278 aa).

The interval 80-83 (TDFV) is involved in Mg(2+) ion dislocation from EF-Tu.

The protein belongs to the EF-Ts family.

It localises to the cytoplasm. Its function is as follows. Associates with the EF-Tu.GDP complex and induces the exchange of GDP to GTP. It remains bound to the aminoacyl-tRNA.EF-Tu.GTP complex up to the GTP hydrolysis stage on the ribosome. This is Elongation factor Ts from Renibacterium salmoninarum (strain ATCC 33209 / DSM 20767 / JCM 11484 / NBRC 15589 / NCIMB 2235).